Consider the following 101-residue polypeptide: ATP-dependent Clp protease adapter protein ClpS 2 (101 aa).

The protein belongs to the ClpS family. Binds to the N-terminal domain of the chaperone ClpA.

Involved in the modulation of the specificity of the ClpAP-mediated ATP-dependent protein degradation. The protein is ATP-dependent Clp protease adapter protein ClpS 2 of Mesorhizobium japonicum (strain LMG 29417 / CECT 9101 / MAFF 303099) (Mesorhizobium loti (strain MAFF 303099)).